The following is a 314-amino-acid chain: Oxidoreductase NAD-binding domain-containing protein 1 (314 aa).

Positions 1-18 (MALVAGSAAYQVLRGVTG) are cleaved as a signal peptide. The FAD-binding FR-type domain maps to 63-166 (EIISPAKVCG…VGGEFCFDPQ (104 aa)). 180–185 (GVGINP) lines the NAD(+) pocket.

This chain is Oxidoreductase NAD-binding domain-containing protein 1 (oxnad1), found in Xenopus laevis (African clawed frog).